We begin with the raw amino-acid sequence, 252 residues long: Ribosomal RNA small subunit methyltransferase NEP1 (252 aa).

Residues Met-176, Gly-209, Gly-214, and 227 to 232 contribute to the S-adenosyl-L-methionine site; that span reads ISNYPL.

The protein belongs to the class IV-like SAM-binding methyltransferase superfamily. RNA methyltransferase NEP1 family. In terms of assembly, homodimer. Part of the small subunit (SSU) processome, composed of more than 70 proteins and the RNA chaperone small nucleolar RNA (snoRNA) U3.

It localises to the nucleus. The protein localises to the nucleolus. The catalysed reaction is a pseudouridine in rRNA + S-adenosyl-L-methionine = an N(1)-methylpseudouridine in rRNA + S-adenosyl-L-homocysteine + H(+). Functionally, S-adenosyl-L-methionine-dependent pseudouridine N(1)-methyltransferase that methylates a pseudouridine in 18S rRNA. Involved the biosynthesis of the hypermodified N1-methyl-N3-(3-amino-3-carboxypropyl) pseudouridine (m1acp3-Psi) conserved in eukaryotic 18S rRNA. Also has an essential role in 40S ribosomal subunit biogenesis independent on its methyltransferase activity, facilitating the incorporation of ribosomal protein S19 during the formation of pre-ribosomes. In terms of biological role, S-adenosyl-L-methionine-dependent pseudouridine N(1)-methyltransferase that methylates pseudouridine at position in 18S rRNA. Involved the biosynthesis of the hypermodified N1-methyl-N3-(3-amino-3-carboxypropyl) pseudouridine (m1acp3-Psi) conserved in eukaryotic 18S rRNA. Is not able to methylate uridine at this position. Also has an essential role in 40S ribosomal subunit biogenesis independent on its methyltransferase activity, facilitating the incorporation of ribosomal protein S19 during the formation of pre-ribosomes. Part of the small subunit (SSU) processome, first precursor of the small eukaryotic ribosomal subunit. During the assembly of the SSU processome in the nucleolus, many ribosome biogenesis factors, an RNA chaperone and ribosomal proteins associate with the nascent pre-rRNA and work in concert to generate RNA folding, modifications, rearrangements and cleavage as well as targeted degradation of pre-ribosomal RNA by the RNA exosome. This is Ribosomal RNA small subunit methyltransferase NEP1 from Drosophila melanogaster (Fruit fly).